The primary structure comprises 477 residues: MAAKRPAAGEGGGKAAAGAAAAKKRVALVNITNVAAAANNAKFNSATWAAPVKKGSLASGRNVCTNRVSAVKSASAKPAPAISRHESAPQKESVIPPKVLSIVPTAAPAPVTVPCSSFVSPMHSGDSVSVDETMSMCDSMKSPDFEYIDNGDSSSVLGSLQRRANENLRISEDRDVEETKWNKDAPSPMEIDQICDVDNNYEDPQLCATLASDIYMHLREAETRKRPSTDFMETIQKDVNPSMRAILIDWLVEVAEEYRLVPDTLYLTVNYIDRYLSGNEINRQRLQLLGVACMLIAAKYEEICAPQVEEFCYITDNTYFRDEVLEMEASVLNYLKFEVTAPTAKCFLRRFVRVAQVSDEDPALHLEFLANYVAELSLLEYNLLSYPPSLVAASAIFLAKFILQPTKHPWNSTLAHYTQYKSSELSDCVKALHRLFSVGPGSNLPAIREKYTQHKKFVAKKHCPPSVPSEFFRDATC.

This sequence belongs to the cyclin family. Cyclin AB subfamily.

This Oryza sativa subsp. japonica (Rice) protein is Cyclin-A1-2 (CYCA1-2).